The chain runs to 569 residues: Proline--tRNA ligase (569 aa).

The protein belongs to the class-II aminoacyl-tRNA synthetase family. ProS type 1 subfamily. As to quaternary structure, homodimer.

Its subcellular location is the cytoplasm. It catalyses the reaction tRNA(Pro) + L-proline + ATP = L-prolyl-tRNA(Pro) + AMP + diphosphate. Functionally, catalyzes the attachment of proline to tRNA(Pro) in a two-step reaction: proline is first activated by ATP to form Pro-AMP and then transferred to the acceptor end of tRNA(Pro). As ProRS can inadvertently accommodate and process non-cognate amino acids such as alanine and cysteine, to avoid such errors it has two additional distinct editing activities against alanine. One activity is designated as 'pretransfer' editing and involves the tRNA(Pro)-independent hydrolysis of activated Ala-AMP. The other activity is designated 'posttransfer' editing and involves deacylation of mischarged Ala-tRNA(Pro). The misacylated Cys-tRNA(Pro) is not edited by ProRS. This Legionella pneumophila (strain Paris) protein is Proline--tRNA ligase.